A 643-amino-acid chain; its full sequence is 1-deoxy-D-xylulose-5-phosphate synthase (643 aa).

Residues histidine 72 and 113 to 115 (GHA) contribute to the thiamine diphosphate site. Aspartate 144 contributes to the Mg(2+) binding site. Thiamine diphosphate is bound by residues 145-146 (GA), asparagine 174, tyrosine 287, and glutamate 370. Asparagine 174 contacts Mg(2+).

It belongs to the transketolase family. DXPS subfamily. In terms of assembly, homodimer. The cofactor is Mg(2+). Requires thiamine diphosphate as cofactor.

It carries out the reaction D-glyceraldehyde 3-phosphate + pyruvate + H(+) = 1-deoxy-D-xylulose 5-phosphate + CO2. It functions in the pathway metabolic intermediate biosynthesis; 1-deoxy-D-xylulose 5-phosphate biosynthesis; 1-deoxy-D-xylulose 5-phosphate from D-glyceraldehyde 3-phosphate and pyruvate: step 1/1. Catalyzes the acyloin condensation reaction between C atoms 2 and 3 of pyruvate and glyceraldehyde 3-phosphate to yield 1-deoxy-D-xylulose-5-phosphate (DXP). In Prochlorococcus marinus (strain MIT 9211), this protein is 1-deoxy-D-xylulose-5-phosphate synthase.